The primary structure comprises 593 residues: Meiosis-specific APC/C activator protein AMA1 (593 aa).

A compositionally biased stretch (basic residues) spans Met-1–Asn-11. The interval Met-1 to Thr-26 is disordered. Positions Ser-12–Ser-25 are enriched in low complexity. Positions Asp-29–Ser-35 match the C-box motif. Low complexity predominate over residues Ser-94–Ser-109. The interval Ser-94–Lys-125 is disordered. Residues Ser-113 to Lys-125 are compositionally biased toward basic and acidic residues. 6 WD repeats span residues Arg-226–Leu-264, Glu-271–Asn-310, Glu-323–Lys-364, Ala-388–Lys-427, Pro-432–Glu-474, and Pro-525–Ile-564.

This sequence belongs to the WD repeat CDC20/Fizzy family. In terms of assembly, interacts with CDC16.

In terms of biological role, activator protein that regulates the ubiquitin ligase activity and substrate specificity of the anaphase promoting complex/cyclosome (APC/C). Required for the ubiquitination and subsequent degradation of the B-type cyclin CLB1 by the APC/C complex during meiosis. Required for meiosis I, late meiotic gene expression and spore wall assembly. The polypeptide is Meiosis-specific APC/C activator protein AMA1 (AMA1) (Saccharomyces cerevisiae (strain ATCC 204508 / S288c) (Baker's yeast)).